The sequence spans 230 residues: GTP cyclohydrolase III (230 aa).

This sequence belongs to the archaeal-type GTP cyclohydrolase family.

The enzyme catalyses GTP + 3 H2O = 2-amino-5-formylamino-6-(5-phospho-D-ribosylamino)pyrimidin-4(3H)-one + 2 phosphate + 2 H(+). Functionally, catalyzes the formation of 2-amino-5-formylamino-6-ribofuranosylamino-4(3H)-pyrimidinone ribonucleotide monophosphate and inorganic phosphate from GTP. Also has an independent pyrophosphate phosphohydrolase activity. The polypeptide is GTP cyclohydrolase III (Saccharolobus islandicus (strain M.14.25 / Kamchatka #1) (Sulfolobus islandicus)).